Reading from the N-terminus, the 404-residue chain is Caspase-1 (404 aa).

Positions 1-91 constitute a CARD domain; it reads MADKVLKEKR…YLAGTLGLSA (91 aa). Residues 1-119 constitute a propeptide that is removed on maturation; sequence MADKVLKEKR…SFPAPQAVQD (119 aa). A Glycyl lysine isopeptide (Lys-Gly) (interchain with G-Cter in ubiquitin) cross-link involves residue Lys134. Active-site residues include His237 and Cys285. Residues 298–316 constitute a propeptide, interdomain linker; the sequence is SVGVSGNLSLPTTEEFEDD. Ser302 bears the Phosphoserine mark.

This sequence belongs to the peptidase C14A family. Heterotetramer that consists of two anti-parallel arranged heterodimers, each one formed by a 20 kDa (Caspase-1 subunit p20) and a 10 kDa (Caspase-1 subunit p10) subunit. May be a component of the inflammasome, a protein complex which also includes PYCARD, CARD8 and NLRP2 and whose function would be the activation of pro-inflammatory caspases. Component of the AIM2 PANoptosome complex, a multiprotein complex that drives inflammatory cell death (PANoptosis). Interacts with CARD8; interacts with the released C-terminus of CARD8 which forms an inflammasome and directly activates CASP1 to promote pyroptosis. Both the p10 and p20 subunits interact with MEFV. Interacts with CARD17P/INCA and CARD18. Interacts with SERPINB1; this interaction regulates CASP1 activity. As to quaternary structure, heterotetramer that consists of two anti-parallel arranged heterodimers, each one formed by a 20 kDa (Caspase-1 subunit p20) and a 10 kDa (Caspase-1 subunit p10) subunit. Can form a heterodimer with isoform epsilon which then has an inhibitory effect. In terms of assembly, heterotetramer that consists of two anti-parallel arranged heterodimers, each one formed by a 20 kDa (Caspase-1 subunit p20) and a 10 kDa (Caspase-1 subunit p10) subunit. Can form a heterodimer with Caspase-1 subunit p20 which then has an inhibitory effect. The two subunits are derived from the precursor sequence by an autocatalytic mechanism. In terms of processing, ubiquitinated via 'Lys-11'-linked polyubiquitination. Deubiquitinated by USP8. Post-translationally, cleavage in the interdomain linker region is required to induce pyroptosis. Expressed in larger amounts in spleen and lung. Detected in liver, heart, small intestine, colon, thymus, prostate, skeletal muscle, peripheral blood leukocytes, kidney and testis. No expression in the brain.

Its subcellular location is the cytoplasm. The protein resides in the cell membrane. It carries out the reaction Strict requirement for an Asp residue at position P1 and has a preferred cleavage sequence of Tyr-Val-Ala-Asp-|-.. Its activity is regulated as follows. (Microbial infection) Specifically inhibited by the cowpox virus Crma protein. Functionally, thiol protease involved in a variety of inflammatory processes by proteolytically cleaving other proteins, such as the precursors of the inflammatory cytokines interleukin-1 beta (IL1B) and interleukin 18 (IL18) as well as the pyroptosis inducer Gasdermin-D (GSDMD), into active mature peptides. Plays a key role in cell immunity as an inflammatory response initiator: once activated through formation of an inflammasome complex, it initiates a pro-inflammatory response through the cleavage of the two inflammatory cytokines IL1B and IL18, releasing the mature cytokines which are involved in a variety of inflammatory processes. Cleaves a tetrapeptide after an Asp residue at position P1. Also initiates pyroptosis, a programmed lytic cell death pathway, through cleavage of GSDMD. In contrast to cleavage of interleukin IL1B, recognition and cleavage of GSDMD is not strictly dependent on the consensus cleavage site but depends on an exosite interface on CASP1 that recognizes and binds the Gasdermin-D, C-terminal (GSDMD-CT) part. Cleaves and activates CASP7 in response to bacterial infection, promoting plasma membrane repair. Upon inflammasome activation, during DNA virus infection but not RNA virus challenge, controls antiviral immunity through the cleavage of CGAS, rendering it inactive. In apoptotic cells, cleaves SPHK2 which is released from cells and remains enzymatically active extracellularly. Apoptosis inactive. The sequence is that of Caspase-1 (CASP1) from Homo sapiens (Human).